Reading from the N-terminus, the 114-residue chain is MTKSHCRNKLIQLFLDYGCEFRSYLKKFDVSHIKIIRIIDCYRNYFKTINNELRDVQTEIIYKPDSLRSNIFKIQWEIHNGLSYDVIKKHNQKLFDYFGIQDEEKLIRIIGLVE.

This is an uncharacterized protein from Acanthamoeba polyphaga mimivirus (APMV).